The primary structure comprises 80 residues: Exodeoxyribonuclease 7 small subunit (80 aa).

This sequence belongs to the XseB family. In terms of assembly, heterooligomer composed of large and small subunits.

Its subcellular location is the cytoplasm. It carries out the reaction Exonucleolytic cleavage in either 5'- to 3'- or 3'- to 5'-direction to yield nucleoside 5'-phosphates.. Its function is as follows. Bidirectionally degrades single-stranded DNA into large acid-insoluble oligonucleotides, which are then degraded further into small acid-soluble oligonucleotides. The chain is Exodeoxyribonuclease 7 small subunit from Phenylobacterium zucineum (strain HLK1).